We begin with the raw amino-acid sequence, 102 residues long: Glutaredoxin-C13 (102 aa).

Positions 1-101 (MDKVMRMSSE…PLIKPYQSIL (101 aa)) constitute a Glutaredoxin domain. A disulfide bridge links Cys21 with Cys24.

The protein belongs to the glutaredoxin family. CC-type subfamily.

Its subcellular location is the cytoplasm. Its function is as follows. Has a glutathione-disulfide oxidoreductase activity in the presence of NADPH and glutathione reductase. Reduces low molecular weight disulfides and proteins. The sequence is that of Glutaredoxin-C13 (GRXC13) from Arabidopsis thaliana (Mouse-ear cress).